Reading from the N-terminus, the 449-residue chain is Bifunctional protein GlmU (449 aa).

The segment at 1 to 230 (MASSKLAVIV…EAELLGVNAR (230 aa)) is pyrophosphorylase. UDP-N-acetyl-alpha-D-glucosamine-binding positions include 11–14 (LAAG), K25, Q74, 79–80 (GT), 102–104 (YGD), G142, E156, N171, and N228. Residue D104 participates in Mg(2+) binding. N228 serves as a coordination point for Mg(2+). Positions 231–251 (SELAVAEALVQARLREAAMDN) are linker. The tract at residues 252-449 (GATLIDPATV…QQAAKKAKKD (198 aa)) is N-acetyltransferase. UDP-N-acetyl-alpha-D-glucosamine-binding residues include R317 and K335. Catalysis depends on H347, which acts as the Proton acceptor. 2 residues coordinate UDP-N-acetyl-alpha-D-glucosamine: Y350 and N361. Residues A364, 370–371 (NY), S389, A407, and R424 each bind acetyl-CoA.

This sequence in the N-terminal section; belongs to the N-acetylglucosamine-1-phosphate uridyltransferase family. It in the C-terminal section; belongs to the transferase hexapeptide repeat family. In terms of assembly, homotrimer. It depends on Mg(2+) as a cofactor.

It localises to the cytoplasm. It catalyses the reaction alpha-D-glucosamine 1-phosphate + acetyl-CoA = N-acetyl-alpha-D-glucosamine 1-phosphate + CoA + H(+). It carries out the reaction N-acetyl-alpha-D-glucosamine 1-phosphate + UTP + H(+) = UDP-N-acetyl-alpha-D-glucosamine + diphosphate. It functions in the pathway nucleotide-sugar biosynthesis; UDP-N-acetyl-alpha-D-glucosamine biosynthesis; N-acetyl-alpha-D-glucosamine 1-phosphate from alpha-D-glucosamine 6-phosphate (route II): step 2/2. Its pathway is nucleotide-sugar biosynthesis; UDP-N-acetyl-alpha-D-glucosamine biosynthesis; UDP-N-acetyl-alpha-D-glucosamine from N-acetyl-alpha-D-glucosamine 1-phosphate: step 1/1. The protein operates within bacterial outer membrane biogenesis; LPS lipid A biosynthesis. Catalyzes the last two sequential reactions in the de novo biosynthetic pathway for UDP-N-acetylglucosamine (UDP-GlcNAc). The C-terminal domain catalyzes the transfer of acetyl group from acetyl coenzyme A to glucosamine-1-phosphate (GlcN-1-P) to produce N-acetylglucosamine-1-phosphate (GlcNAc-1-P), which is converted into UDP-GlcNAc by the transfer of uridine 5-monophosphate (from uridine 5-triphosphate), a reaction catalyzed by the N-terminal domain. In Paramagnetospirillum magneticum (strain ATCC 700264 / AMB-1) (Magnetospirillum magneticum), this protein is Bifunctional protein GlmU.